A 205-amino-acid polypeptide reads, in one-letter code: MSSRKKVLLKVIILGDSGVGKTSLMNQYVNKKFSASYKATIGADFLTREVLVDDRQVTMQLWDTAGQERFQSLGVAFYRGADCCVLVYDVNNSKSFDALDSWRDEFLIQASPRDPDNFPFVVLGNKIDMEESKRVISTKRAMTFCQSKGNIPYFETSAKEAINVEQAFEVIARNALMQEESEEFSGDFQDPINIHIENDRDGCAC.

GTP is bound by residues 17 to 23 (SGVGKTS), 33 to 40 (FSASYKAT), Gly66, 125 to 128 (NKID), and 157 to 159 (SAK). An Effector region motif is present at residues 37-45 (YKATIGADF). 2 S-geranylgeranyl cysteine lipidation sites follow: Cys203 and Cys205. Residue Cys205 is modified to Cysteine methyl ester.

This sequence belongs to the small GTPase superfamily. Rab family.

Its subcellular location is the cell membrane. Its activity is regulated as follows. Alternates between an inactive form bound to GDP and an active form bound to GTP. Activated by guanine nucleotide-exchange factors (GEFs), and inactivated by GTPase-activating proteins (GAPs). Functionally, ypt/Rab-type GTPases are key regulators of membrane trafficking and intracellular vesicular transport. They act as molecular switches that convert between GTP-bound and GDP-bound states, and regulate virtually all steps of membrane traffic from the formation of the transport vesicle at the donor membrane to its fusion at the target membrane. In the GDP-bound state, Ypt proteins are predominantly cytosolic, solubilized through the interaction with a GDP dissociation inhibitor (GDI). In the GTP-bound state, the proteins are membrane bound and interact with specific effector proteins that select cargo, promote vesicle movement, or verify the correct site of fusion. This Neurospora crassa (strain ATCC 24698 / 74-OR23-1A / CBS 708.71 / DSM 1257 / FGSC 987) protein is Ypt/Rab-type GTPase Rab7 (gtp-14).